The chain runs to 407 residues: Cysteine desulfurase (407 aa).

Lys226 bears the N6-(pyridoxal phosphate)lysine mark. Cys364 serves as the catalytic Cysteine persulfide intermediate.

This sequence belongs to the class-V pyridoxal-phosphate-dependent aminotransferase family. Csd subfamily. Homodimer. Interacts with SufE and the SufBCD complex composed of SufB, SufC and SufD. The interaction with SufE is required to mediate the direct transfer of the sulfur atom from the S-sulfanylcysteine. Pyridoxal 5'-phosphate is required as a cofactor.

It is found in the cytoplasm. The catalysed reaction is (sulfur carrier)-H + L-cysteine = (sulfur carrier)-SH + L-alanine. It catalyses the reaction L-selenocysteine + AH2 = hydrogenselenide + L-alanine + A + H(+). It participates in cofactor biosynthesis; iron-sulfur cluster biosynthesis. In terms of biological role, cysteine desulfurases mobilize the sulfur from L-cysteine to yield L-alanine, an essential step in sulfur metabolism for biosynthesis of a variety of sulfur-containing biomolecules. Component of the suf operon, which is activated and required under specific conditions such as oxidative stress and iron limitation. Acts as a potent selenocysteine lyase in vitro, that mobilizes selenium from L-selenocysteine. Selenocysteine lyase activity is however unsure in vivo. The sequence is that of Cysteine desulfurase from Pectobacterium atrosepticum (strain SCRI 1043 / ATCC BAA-672) (Erwinia carotovora subsp. atroseptica).